Reading from the N-terminus, the 100-residue chain is Vesicle-associated membrane protein 3 (100 aa).

Ser2 carries the post-translational modification N-acetylserine. The Cytoplasmic segment spans residues 2–77; that stretch reads STGPTAATGS…KRKYWWKNCK (76 aa). The region spanning 14–74 is the v-SNARE coiled-coil homology domain; sequence RLQQTQNQVD…AKLKRKYWWK (61 aa). Glycyl lysine isopeptide (Lys-Gly) (interchain with G-Cter in ubiquitin) cross-links involve residues Lys66, Lys68, and Lys77. Residues 78 to 98 traverse the membrane as a helical; Anchor for type IV membrane protein segment; that stretch reads MWAIGITVLVIFIIIIIVWVV. Over 99–100 the chain is Vesicular; sequence SS.

Belongs to the synaptobrevin family. In terms of assembly, interacts with POPDC1 (via the C-terminus cytoplasmic tail). Interacts with BCAP31; involved in VAMP3 export from the endoplasmic reticulum. Interacts with BAIAP3; this interaction is increased in the presence of calcium. Interacts with PICALM. Ubiquitinated by RNF167 at Lys-66, Lys-68 and Lys-77, regulating the recycling endosome pathway. Post-translationally, (Microbial infection) Targeted and hydrolyzed by C.botulinum neurotoxin type B (BoNT/B, botB) which hydrolyzes the 59-Gln-|-Phe-60 bond and probably inhibits neurotransmitter release. In terms of processing, (Microbial infection) Targeted and hydrolyzed by C.botulinum neurotoxin type D (BoNT/D, botD) which hydrolyzes the 42-Lys-|-Leu-43 bond and probably inhibits neurotransmitter release. Note that humans are not known to be infected by C.botulinum type D. (Microbial infection) Targeted and hydrolyzed by C.botulinum neurotoxin type F (BoNT/F, botF) which hydrolyzes the 41-Gln-|-Lys-42 bond and probably inhibits neurotransmitter release.

It is found in the early endosome membrane. Its subcellular location is the recycling endosome membrane. The protein localises to the synapse. It localises to the synaptosome. Its function is as follows. SNARE involved in vesicular transport from the late endosomes to the trans-Golgi network. This Homo sapiens (Human) protein is Vesicle-associated membrane protein 3 (VAMP3).